Consider the following 375-residue polypeptide: Neuropeptide Y receptor type 4 (375 aa).

Topologically, residues M1–E39 are extracellular. Residues N2, N19, and N29 are each glycosylated (N-linked (GlcNAc...) asparagine). The chain crosses the membrane as a helical span at residues L40 to L60. At C61 to L78 the chain is on the cytoplasmic side. Residues L79 to V99 traverse the membrane as a helical segment. Over T100–M116 the chain is Extracellular. A disulfide bridge links C114 with C201. Residues L117 to L137 traverse the membrane as a helical segment. The Cytoplasmic segment spans residues E138 to Q155. A helical transmembrane segment spans residues A156–A176. At N177–R211 the chain is on the extracellular side. N187 carries N-linked (GlcNAc...) asparagine glycosylation. A helical transmembrane segment spans residues L212 to V232. The Cytoplasmic segment spans residues C233 to M266. A helical membrane pass occupies residues L267–L287. At E288–N301 the chain is on the extracellular side. A helical membrane pass occupies residues L302–Y322. At G323–I375 the chain is on the cytoplasmic side. C340 is lipidated: S-palmitoyl cysteine.

This sequence belongs to the G-protein coupled receptor 1 family. Heart, detected in small intestine.

Its subcellular location is the cell membrane. In terms of biological role, g protein-coupled receptor for PPY/pancreatic polypeptide/PP that is negatively coupled to cAMP. Has much lower affinity for the NPY/neuropeptide Y and PYY/peptide YY. The protein is Neuropeptide Y receptor type 4 (Npy4r) of Mus musculus (Mouse).